Consider the following 242-residue polypeptide: Protein LST7 (242 aa).

One can recognise a uDENN FLCN/SMCR8-type domain in the interval 48-212 (SCLLQFPEES…NKSKFGRNLV (165 aa)).

Required for the nitrogen-regulated transport of amino acid permeases GAP1 and PUT4 from the Golgi to the cell surface. The chain is Protein LST7 (LST7) from Saccharomyces cerevisiae (strain ATCC 204508 / S288c) (Baker's yeast).